The sequence spans 615 residues: MPIQVLPPQLANQIAAGEVVERPASVVKELVENSLDAGATRIDIDIERGGAKLIRIRDNGCGIKKDELALALARHATSKIASLDDLEAIISLGFRGEALASISSVSRLTLTSRTAEQQEAWQAYAEGRDMNVTVKPAAHPVGTTLEVLDLFYNTPARRKFLRTEKTEFNHIDEIIRRIALARFDVTINLSHNGKIVRQYRAVPEGGQKERRLGAICGTAFLEQALAIEWQHGDLTLRGWVADPNHTTPALAEIQYCYVNGRMMRDRLINHAIRQACEDKLGADQQPAFVLYLEIDPHQVDVNVHPAKHEVRFHQSRLVHDFIYQGVLSVLQQQLETPLPLDDEPQPAPRSIPENRVAAGRNHFAEPAAREPVAPRYTPAPASGSRPAAPWPNAQPGYQKQQGEVYRQLLQTPAPMQKPKAPEPQEPALAANSQSFGRVLTIVHSDCALLERDGNISLLSLPVAERWLRQAQLTPGEAPVCAQPLLIPLRLKVSAEEKSALEKAQSALAELGIDFQSDAQHVTIRAVPLPLRQQNLQILIPELIGYLAKQSVFEPGNIAQWIARNLMSEHAQWSMAQAITLLADVERLCPQLVKTPPGGLLQSVDLHPAIKALKDE.

Residues 363–397 (FAEPAAREPVAPRYTPAPASGSRPAAPWPNAQPGY) are disordered. The span at 364 to 391 (AEPAAREPVAPRYTPAPASGSRPAAPWP) shows a compositional bias: low complexity.

The protein belongs to the DNA mismatch repair MutL/HexB family.

Its function is as follows. This protein is involved in the repair of mismatches in DNA. It is required for dam-dependent methyl-directed DNA mismatch repair. May act as a 'molecular matchmaker', a protein that promotes the formation of a stable complex between two or more DNA-binding proteins in an ATP-dependent manner without itself being part of a final effector complex. In Escherichia coli O9:H4 (strain HS), this protein is DNA mismatch repair protein MutL.